Reading from the N-terminus, the 70-residue chain is Large ribosomal subunit protein bL33m (70 aa).

Belongs to the bacterial ribosomal protein bL33 family. Component of the mitochondrial large ribosomal subunit (mt-LSU). Mature yeast 74S mitochondrial ribosomes consist of a small (37S) and a large (54S) subunit. The 37S small subunit contains a 15S ribosomal RNA (15S mt-rRNA) and 34 different proteins. The 54S large subunit contains a 21S rRNA (21S mt-rRNA) and 46 different proteins. bL33m stabilizes the tRNA acceptor stem in the E-site.

The protein resides in the mitochondrion. Its function is as follows. Component of the mitochondrial ribosome (mitoribosome), a dedicated translation machinery responsible for the synthesis of mitochondrial genome-encoded proteins, including at least some of the essential transmembrane subunits of the mitochondrial respiratory chain. The mitoribosomes are attached to the mitochondrial inner membrane and translation products are cotranslationally integrated into the membrane. In Saccharomyces cerevisiae (strain ATCC 204508 / S288c) (Baker's yeast), this protein is Large ribosomal subunit protein bL33m (MRPL39).